A 42-amino-acid polypeptide reads, in one-letter code: Delta-actinopoditoxin-Mb1a (42 aa).

Intrachain disulfides connect cysteine 1/cysteine 15, cysteine 8/cysteine 20, cysteine 14/cysteine 31, and cysteine 16/cysteine 42.

Belongs to the neurotoxin 06 (delta-actx) family. In terms of tissue distribution, expressed by the venom gland.

Its subcellular location is the secreted. Functionally, neurotoxin that slows the inactivation of vertebrate tetrodotoxin-sensitive voltage-gated sodium channels (Nav) and most likely insect sodium channels presumably by binding to site 3 of the channel. Effects are an increase in resting tension, a muscle fasciculation and a decrease in indirect twitch tension. It fails to affect tetrodotoxin-resistant sodium currents. In vivo, is lethal to both vertebrates and insects. The sequence is that of Delta-actinopoditoxin-Mb1a from Missulena bradleyi (Eastern mouse spider).